The primary structure comprises 441 residues: MKLANWCWLSSTVLATYGFLVVANNETEEIKDEAAQNACRVRLESRGRCEEEGECPYQVNLPPLTIQLPKQFSRIEEVFKEVQNLKEIVNSLKKTCQDCKLQADDSRDPGRNGLLLPGTGAPGETGDNRVRELEGEVNKLSSDLKNAKEEIDVLQGRLEKLNLVNMNNIEQYVDSKVANLTFVVNSLDGKCSSKCPRQEQIQSLPVQQHLIYKDCSEYYTIGKRSSELYRVTPEPRNSSFEVFCDMETMAGGWTVLQARVDGSTNFTRTWQDYKVGFGNLRREFWLGNDKIHLLTKSKDMILRIDLEDFNGIKLYALYDHFYVANEFLKYRLHIGNYNGTAGDALRFSKHYNHDLKFFTTPDRDNDRYPSGNCGLYYSSGWWFDACLSANLNGKYYHQKYRGVRNGIFWGTWPGISEAQPGGYKSSFKEVKMMIRPKHFKP.

The first 15 residues, Met1 to Ala15, serve as a signal peptide directing secretion. Asn25 carries an N-linked (GlcNAc...) asparagine glycan. A coiled-coil region spans residues Ser73 to Asn167. The disordered stretch occupies residues Gln102–Asn128. 4 N-linked (GlcNAc...) asparagine glycosylation sites follow: Asn179, Asn237, Asn265, and Asn338. The Fibrinogen C-terminal domain maps to Val206–His438.

Homotetramer; disulfide-linked.

The protein resides in the secreted. Its function is as follows. May play a role in physiologic lymphocyte functions at mucosal sites. The polypeptide is Fibroleukin (FGL2) (Bos taurus (Bovine)).